The following is a 571-amino-acid chain: Proline--tRNA ligase (571 aa).

It belongs to the class-II aminoacyl-tRNA synthetase family. ProS type 1 subfamily. In terms of assembly, homodimer.

It localises to the cytoplasm. It carries out the reaction tRNA(Pro) + L-proline + ATP = L-prolyl-tRNA(Pro) + AMP + diphosphate. Functionally, catalyzes the attachment of proline to tRNA(Pro) in a two-step reaction: proline is first activated by ATP to form Pro-AMP and then transferred to the acceptor end of tRNA(Pro). As ProRS can inadvertently accommodate and process non-cognate amino acids such as alanine and cysteine, to avoid such errors it has two additional distinct editing activities against alanine. One activity is designated as 'pretransfer' editing and involves the tRNA(Pro)-independent hydrolysis of activated Ala-AMP. The other activity is designated 'posttransfer' editing and involves deacylation of mischarged Ala-tRNA(Pro). The misacylated Cys-tRNA(Pro) is not edited by ProRS. This Ligilactobacillus salivarius (strain UCC118) (Lactobacillus salivarius) protein is Proline--tRNA ligase.